Consider the following 243-residue polypeptide: Transmembrane protein 174 (243 aa).

2 helical membrane passes run 40 to 60 (LLFS…MGWI) and 73 to 93 (LLGP…VCKF).

In terms of assembly, interacts with SLC34A1; regulates SLC34A1 internalization by PTH and FGF23.

The protein localises to the endoplasmic reticulum membrane. The protein resides in the apical cell membrane. Functionally, regulator of plasma phosphate homeostasis. Decreases serum inorganic phosphate (Pi) uptake by regulating the sodium-phosphate cotransporter SLC34A1 trafficking by PTH and FGF23 in the kidney. This chain is Transmembrane protein 174 (TMEM174), found in Pongo abelii (Sumatran orangutan).